The chain runs to 1478 residues: DNA-directed RNA polymerase subunit beta' (1478 aa).

The Mg(2+) site is built by Asp535, Asp537, and Asp539. Residues Cys1034, Cys1109, Cys1116, and Cys1119 each contribute to the Zn(2+) site.

The protein belongs to the RNA polymerase beta' chain family. In terms of assembly, the RNAP catalytic core consists of 2 alpha, 1 beta, 1 beta' and 1 omega subunit. When a sigma factor is associated with the core the holoenzyme is formed, which can initiate transcription. Requires Mg(2+) as cofactor. It depends on Zn(2+) as a cofactor.

The catalysed reaction is RNA(n) + a ribonucleoside 5'-triphosphate = RNA(n+1) + diphosphate. DNA-dependent RNA polymerase catalyzes the transcription of DNA into RNA using the four ribonucleoside triphosphates as substrates. The protein is DNA-directed RNA polymerase subunit beta' of Mycoplasmopsis agalactiae (strain NCTC 10123 / CIP 59.7 / PG2) (Mycoplasma agalactiae).